We begin with the raw amino-acid sequence, 333 residues long: Electron transfer flavoprotein subunit alpha, mitochondrial (333 aa).

A mitochondrion-targeting transit peptide spans methionine 1 to phenylalanine 19. The interval glutamine 20–leucine 204 is domain I. Position 59 is an N6-acetyllysine; alternate (lysine 59). Lysine 59 is subject to N6-succinyllysine; alternate. An N6-acetyllysine modification is found at lysine 62. Lysine 69 is modified (N6-acetyllysine; alternate). Position 69 is an N6-succinyllysine; alternate (lysine 69). The residue at position 75 (lysine 75) is an N6-acetyllysine. The residue at position 85 (lysine 85) is an N6-acetyllysine; alternate. Position 85 is an N6-succinyllysine; alternate (lysine 85). A Phosphothreonine modification is found at threonine 93. N6-acetyllysine occurs at positions 101 and 139. Serine 140 carries the post-translational modification Phosphoserine. Position 158 is an N6-acetyllysine; alternate (lysine 158). Lysine 158 bears the N6-succinyllysine; alternate mark. An N6-acetyllysine modification is found at lysine 164. Residue lysine 187 is modified to N6-succinyllysine. An N6-acetyllysine; alternate modification is found at lysine 203. An N6-succinyllysine; alternate modification is found at lysine 203. Positions threonine 205–lysine 333 are domain II. The residue at position 216 (lysine 216) is an N6-succinyllysine. Arginine 223 provides a ligand contact to FAD. N6-acetyllysine; alternate is present on residues lysine 226 and lysine 232. N6-succinyllysine; alternate is present on residues lysine 226 and lysine 232. Residues serine 248, valine 263–threonine 266, serine 281–histidine 286, and asparagine 300 each bind FAD. N6-succinyllysine is present on lysine 301. Position 318 to 319 (aspartate 318 to leucine 319) interacts with FAD.

It belongs to the ETF alpha-subunit/FixB family. In terms of assembly, heterodimer composed of ETFA and ETFB. Identified in a complex that contains ETFA, ETFB and ETFRF1. Interaction with ETFRF1 promotes dissociation of the bound FAD and loss of electron transfer activity. Interacts with TASOR. FAD is required as a cofactor. In terms of tissue distribution, expressed in the spermatogonia, spermatocytes, ovary and granular cells within the cerebellum.

It is found in the mitochondrion matrix. Functionally, heterodimeric electron transfer flavoprotein that accepts electrons from several mitochondrial dehydrogenases, including acyl-CoA dehydrogenases, glutaryl-CoA and sarcosine dehydrogenase. It transfers the electrons to the main mitochondrial respiratory chain via ETF-ubiquinone oxidoreductase (ETF dehydrogenase). Required for normal mitochondrial fatty acid oxidation and normal amino acid metabolism. This Mus musculus (Mouse) protein is Electron transfer flavoprotein subunit alpha, mitochondrial (Etfa).